The chain runs to 306 residues: MNAKLSSSGMVLKELPEVALQKISSNYYWAVFAVFLLCAIVFPLVSIFSLPQKQTYHRFFSILSLVSCLAYFTMACNYGLKNVFSSASFFREVSVRMVYYVRYIQWLINFPLIIVMLHWTVGVSILEIAYVVCYVLFAIVCLLAAALTSSPYKWAYYGFSFVGYFIALAHSVVLHKKYASRLETSARLGFLWSIVYLHVIWFLYYACWILSEGLNVISPIGEAIFYSILDLFEFGFFGAAFSWMLDLVGIENFKSPQSIPLGACSPADDKFSMCPDMEAQNQADDLAVETRIQISNLPSSPTKNNC.

A run of 7 helical transmembrane segments spans residues 28 to 48, 59 to 79, 103 to 123, 125 to 145, 154 to 174, 190 to 210, and 224 to 244; these read YWAV…VSIF, FFSI…CNYG, YIQW…TVGV, ILEI…LLAA, WAYY…SVVL, FLWS…CWIL, and IFYS…FSWM.

This sequence belongs to the archaeal/bacterial/fungal opsin family.

Its subcellular location is the membrane. Has a role in meiosis. The protein is Meiotically up-regulated gene 73 protein (mug73) of Schizosaccharomyces pombe (strain 972 / ATCC 24843) (Fission yeast).